A 279-amino-acid polypeptide reads, in one-letter code: Shikimate dehydrogenase (NADP(+)) (279 aa).

Residues 14 to 16 (SLS) and Thr-62 each bind shikimate. Residue Lys-66 is the Proton acceptor of the active site. Asn-87 and Asp-103 together coordinate shikimate. Residues 127 to 131 (GAGGA), 151 to 156 (NRTKAK), and Met-215 contribute to the NADP(+) site. Position 217 (Tyr-217) interacts with shikimate. Gly-239 provides a ligand contact to NADP(+).

This sequence belongs to the shikimate dehydrogenase family. Homodimer.

It carries out the reaction shikimate + NADP(+) = 3-dehydroshikimate + NADPH + H(+). Its pathway is metabolic intermediate biosynthesis; chorismate biosynthesis; chorismate from D-erythrose 4-phosphate and phosphoenolpyruvate: step 4/7. Its function is as follows. Involved in the biosynthesis of the chorismate, which leads to the biosynthesis of aromatic amino acids. Catalyzes the reversible NADPH linked reduction of 3-dehydroshikimate (DHSA) to yield shikimate (SA). The sequence is that of Shikimate dehydrogenase (NADP(+)) from Alteromonas mediterranea (strain DSM 17117 / CIP 110805 / LMG 28347 / Deep ecotype).